The chain runs to 94 residues: Integration host factor subunit beta (94 aa).

Belongs to the bacterial histone-like protein family. In terms of assembly, heterodimer of an alpha and a beta chain.

Its function is as follows. This protein is one of the two subunits of integration host factor, a specific DNA-binding protein that functions in genetic recombination as well as in transcriptional and translational control. The protein is Integration host factor subunit beta of Brucella anthropi (strain ATCC 49188 / DSM 6882 / CCUG 24695 / JCM 21032 / LMG 3331 / NBRC 15819 / NCTC 12168 / Alc 37) (Ochrobactrum anthropi).